We begin with the raw amino-acid sequence, 862 residues long: Active breakpoint cluster region-related protein (862 aa).

The tract at residues 30-84 (DAEGNEEHKSSREGSETMPYIDESPTMSPQLSARSQDSVDGVSPTPTEVLLPGGE) is disordered. The segment covering 34-44 (NEEHKSSREGS) has biased composition (basic and acidic residues). The span at 54–67 (PTMSPQLSARSQDS) shows a compositional bias: polar residues. The 194-residue stretch at 93–286 (MRKLVLSGVL…QNFLSSINED (194 aa)) folds into the DH domain. The 160-residue stretch at 303 to 462 (QLVKDGFLVE…WREAIQKLQK (160 aa)) folds into the PH domain. Residues 488 to 616 (VHNVPIISHK…QSKNWHDDVI (129 aa)) enclose the C2 domain. One can recognise a Rho-GAP domain in the interval 650–848 (VKISVVTKRE…YYLQHPPISF (199 aa)).

It is found in the cell projection. Its subcellular location is the dendritic spine. The protein resides in the axon. The protein localises to the synapse. Its function is as follows. Protein with a unique structure having two opposing regulatory activities toward small GTP-binding proteins. The C-terminus is a GTPase-activating protein domain which stimulates GTP hydrolysis by RAC1, RAC2 and CDC42. Accelerates the intrinsic rate of GTP hydrolysis of RAC1 or CDC42, leading to down-regulation of the active GTP-bound form. The central Dbl homology (DH) domain functions as guanine nucleotide exchange factor (GEF) that modulates the GTPases CDC42, RHOA and RAC1. Promotes the conversion of CDC42, RHOA and RAC1 from the GDP-bound to the GTP-bound form. This Xenopus tropicalis (Western clawed frog) protein is Active breakpoint cluster region-related protein (abr).